The primary structure comprises 284 residues: 2-dehydro-3-deoxyphosphooctonate aldolase (284 aa).

This sequence belongs to the KdsA family.

The protein resides in the cytoplasm. The enzyme catalyses D-arabinose 5-phosphate + phosphoenolpyruvate + H2O = 3-deoxy-alpha-D-manno-2-octulosonate-8-phosphate + phosphate. The protein operates within carbohydrate biosynthesis; 3-deoxy-D-manno-octulosonate biosynthesis; 3-deoxy-D-manno-octulosonate from D-ribulose 5-phosphate: step 2/3. Its pathway is bacterial outer membrane biogenesis; lipopolysaccharide biosynthesis. The polypeptide is 2-dehydro-3-deoxyphosphooctonate aldolase (Mannheimia succiniciproducens (strain KCTC 0769BP / MBEL55E)).